The primary structure comprises 632 residues: 1-deoxy-D-xylulose-5-phosphate synthase (632 aa).

Thiamine diphosphate is bound by residues His-79 and 120–122; that span reads GHA. Asp-152 contributes to the Mg(2+) binding site. Residues 153-154, Asn-181, Phe-293, and Glu-377 each bind thiamine diphosphate; that span reads GS. Mg(2+) is bound at residue Asn-181.

This sequence belongs to the transketolase family. DXPS subfamily. Homodimer. It depends on Mg(2+) as a cofactor. The cofactor is thiamine diphosphate.

The enzyme catalyses D-glyceraldehyde 3-phosphate + pyruvate + H(+) = 1-deoxy-D-xylulose 5-phosphate + CO2. Its pathway is metabolic intermediate biosynthesis; 1-deoxy-D-xylulose 5-phosphate biosynthesis; 1-deoxy-D-xylulose 5-phosphate from D-glyceraldehyde 3-phosphate and pyruvate: step 1/1. Functionally, catalyzes the acyloin condensation reaction between C atoms 2 and 3 of pyruvate and glyceraldehyde 3-phosphate to yield 1-deoxy-D-xylulose-5-phosphate (DXP). This Phocaeicola vulgatus (strain ATCC 8482 / DSM 1447 / JCM 5826 / CCUG 4940 / NBRC 14291 / NCTC 11154) (Bacteroides vulgatus) protein is 1-deoxy-D-xylulose-5-phosphate synthase.